The chain runs to 282 residues: Virginiamycin B lyase (282 aa).

His-217 contacts substrate. Residue Glu-256 participates in Mg(2+) binding. Residue His-258 is the Proton acceptor of the active site. Glu-273 provides a ligand contact to Mg(2+).

The protein belongs to the Vgb family. Monomer. Mg(2+) is required as a cofactor.

In terms of biological role, inactivates the type B streptogramin antibiotics by linearizing the lactone ring at the ester linkage, generating a free phenylglycine carboxylate and converting the threonyl moiety into 2-amino-butenoic acid. The chain is Virginiamycin B lyase from Mycolicibacterium smegmatis (strain ATCC 700084 / mc(2)155) (Mycobacterium smegmatis).